The sequence spans 264 residues: Signal peptidase I (264 aa).

The Cytoplasmic segment spans residues 1 to 18 (MNRDNTKTNKTVKQEFAS). Residues 19–39 (FTFVICIALVIRILIMEPFTV) traverse the membrane as a helical segment. Residues 40 to 264 (PTGSMKATIL…IFKNLYNVDE (225 aa)) lie on the Periplasmic side of the membrane. Catalysis depends on residues serine 43 and lysine 106.

This sequence belongs to the peptidase S26 family.

Its subcellular location is the cell inner membrane. It carries out the reaction Cleavage of hydrophobic, N-terminal signal or leader sequences from secreted and periplasmic proteins.. Functionally, complements E.coli mutants temperature-sensitive for LepB function. This chain is Signal peptidase I (lepB), found in Rickettsia typhi (strain ATCC VR-144 / Wilmington).